The chain runs to 236 residues: Glucosamine-6-phosphate deaminase (236 aa).

Catalysis depends on Asp-62, which acts as the Proton acceptor; for enolization step. The active-site For ring-opening step is the Asn-128. The Proton acceptor; for ring-opening step role is filled by His-130. Glu-135 functions as the For ring-opening step in the catalytic mechanism.

The protein belongs to the glucosamine/galactosamine-6-phosphate isomerase family. NagB subfamily.

It carries out the reaction alpha-D-glucosamine 6-phosphate + H2O = beta-D-fructose 6-phosphate + NH4(+). The protein operates within amino-sugar metabolism; N-acetylneuraminate degradation; D-fructose 6-phosphate from N-acetylneuraminate: step 5/5. Functionally, catalyzes the reversible isomerization-deamination of glucosamine 6-phosphate (GlcN6P) to form fructose 6-phosphate (Fru6P) and ammonium ion. The chain is Glucosamine-6-phosphate deaminase from Pediococcus pentosaceus (strain ATCC 25745 / CCUG 21536 / LMG 10740 / 183-1w).